We begin with the raw amino-acid sequence, 56 residues long: Small ribosomal subunit protein uS14 (56 aa).

The Zn(2+) site is built by Cys21, Cys24, Cys39, and Cys42.

This sequence belongs to the universal ribosomal protein uS14 family. Zinc-binding uS14 subfamily. As to quaternary structure, part of the 30S ribosomal subunit. The cofactor is Zn(2+).

Functionally, binds 16S rRNA, required for the assembly of 30S particles. In Pyrococcus abyssi (strain GE5 / Orsay), this protein is Small ribosomal subunit protein uS14.